The sequence spans 174 residues: Crossover junction endodeoxyribonuclease RuvC (174 aa).

Residues Asp8, Glu67, and Asp139 contribute to the active site. Mg(2+)-binding residues include Asp8, Glu67, and Asp139.

This sequence belongs to the RuvC family. As to quaternary structure, homodimer which binds Holliday junction (HJ) DNA. The HJ becomes 2-fold symmetrical on binding to RuvC with unstacked arms; it has a different conformation from HJ DNA in complex with RuvA. In the full resolvosome a probable DNA-RuvA(4)-RuvB(12)-RuvC(2) complex forms which resolves the HJ. The cofactor is Mg(2+).

The protein resides in the cytoplasm. It catalyses the reaction Endonucleolytic cleavage at a junction such as a reciprocal single-stranded crossover between two homologous DNA duplexes (Holliday junction).. Its function is as follows. The RuvA-RuvB-RuvC complex processes Holliday junction (HJ) DNA during genetic recombination and DNA repair. Endonuclease that resolves HJ intermediates. Cleaves cruciform DNA by making single-stranded nicks across the HJ at symmetrical positions within the homologous arms, yielding a 5'-phosphate and a 3'-hydroxyl group; requires a central core of homology in the junction. The consensus cleavage sequence is 5'-(A/T)TT(C/G)-3'. Cleavage occurs on the 3'-side of the TT dinucleotide at the point of strand exchange. HJ branch migration catalyzed by RuvA-RuvB allows RuvC to scan DNA until it finds its consensus sequence, where it cleaves and resolves the cruciform DNA. The polypeptide is Crossover junction endodeoxyribonuclease RuvC (Pseudomonas putida (strain ATCC 700007 / DSM 6899 / JCM 31910 / BCRC 17059 / LMG 24140 / F1)).